Reading from the N-terminus, the 156-residue chain is Endoribonuclease YbeY (156 aa).

3 residues coordinate Zn(2+): H122, H126, and H132.

Belongs to the endoribonuclease YbeY family. The cofactor is Zn(2+).

It localises to the cytoplasm. In terms of biological role, single strand-specific metallo-endoribonuclease involved in late-stage 70S ribosome quality control and in maturation of the 3' terminus of the 16S rRNA. This chain is Endoribonuclease YbeY, found in Bacillus cereus (strain G9842).